Here is a 64-residue protein sequence, read N- to C-terminus: Leader peptide SpeFL (64 aa).

Positions 32-38 (HIRRTRH) match the Ornithine recognition loop motif. Arg35 is an L-ornithine binding site.

It belongs to the speF operon leader peptide family. In terms of assembly, binds ornithine in stalled 70S ribosomes, blocking the upper two-thirds of the exit tunnel. Contacts 23S rRNA and ribosomal proteins L4 and L22.

In terms of biological role, a small protein (arrest peptide) encoded upstream of inducible ornithine carboxylase gene (speF) that controls expression of downstream genes (usually speF and potE) by transcriptional and translational attenuation. In Haemophilus influenzae (strain ATCC 51907 / DSM 11121 / KW20 / Rd), this protein is Leader peptide SpeFL.